The following is a 457-amino-acid chain: Siroheme synthase (457 aa).

The tract at residues 1 to 204 is precorrin-2 dehydrogenase /sirohydrochlorin ferrochelatase; the sequence is MDHLPIFCQL…ADEKAVNATT (204 aa). NAD(+) is bound by residues 22-23 and 43-44; these read DV and LT. Serine 128 carries the post-translational modification Phosphoserine. The interval 216-457 is uroporphyrinogen-III C-methyltransferase; sequence GEVVLVGAGP…RDKLNWFSNY (242 aa). Proline 225 lines the S-adenosyl-L-methionine pocket. The active-site Proton acceptor is the aspartate 248. Lysine 270 (proton donor) is an active-site residue. Residues 301–303, isoleucine 306, 331–332, methionine 382, and glycine 411 each bind S-adenosyl-L-methionine; these read GGD and TA.

It in the N-terminal section; belongs to the precorrin-2 dehydrogenase / sirohydrochlorin ferrochelatase family. This sequence in the C-terminal section; belongs to the precorrin methyltransferase family.

It carries out the reaction uroporphyrinogen III + 2 S-adenosyl-L-methionine = precorrin-2 + 2 S-adenosyl-L-homocysteine + H(+). It catalyses the reaction precorrin-2 + NAD(+) = sirohydrochlorin + NADH + 2 H(+). The catalysed reaction is siroheme + 2 H(+) = sirohydrochlorin + Fe(2+). Its pathway is cofactor biosynthesis; adenosylcobalamin biosynthesis; precorrin-2 from uroporphyrinogen III: step 1/1. The protein operates within cofactor biosynthesis; adenosylcobalamin biosynthesis; sirohydrochlorin from precorrin-2: step 1/1. It participates in porphyrin-containing compound metabolism; siroheme biosynthesis; precorrin-2 from uroporphyrinogen III: step 1/1. It functions in the pathway porphyrin-containing compound metabolism; siroheme biosynthesis; siroheme from sirohydrochlorin: step 1/1. Its pathway is porphyrin-containing compound metabolism; siroheme biosynthesis; sirohydrochlorin from precorrin-2: step 1/1. Multifunctional enzyme that catalyzes the SAM-dependent methylations of uroporphyrinogen III at position C-2 and C-7 to form precorrin-2 via precorrin-1. Then it catalyzes the NAD-dependent ring dehydrogenation of precorrin-2 to yield sirohydrochlorin. Finally, it catalyzes the ferrochelation of sirohydrochlorin to yield siroheme. This chain is Siroheme synthase, found in Salmonella dublin (strain CT_02021853).